A 110-amino-acid chain; its full sequence is uncharacterized protein (110 aa).

Residues 18–34 (MFPLISTFTSIGLGVLM) form a helical membrane-spanning segment.

The protein resides in the membrane. This is an uncharacterized protein from Saccharomyces cerevisiae (strain ATCC 204508 / S288c) (Baker's yeast).